We begin with the raw amino-acid sequence, 500 residues long: Lysine--tRNA ligase (500 aa).

Residues glutamate 409 and glutamate 416 each coordinate Mg(2+).

The protein belongs to the class-II aminoacyl-tRNA synthetase family. Homodimer. It depends on Mg(2+) as a cofactor.

It localises to the cytoplasm. The enzyme catalyses tRNA(Lys) + L-lysine + ATP = L-lysyl-tRNA(Lys) + AMP + diphosphate. This Lysinibacillus sphaericus (strain C3-41) protein is Lysine--tRNA ligase.